Here is a 208-residue protein sequence, read N- to C-terminus: DNA-binding protein HupB (208 aa).

Residues 1–90 are bacterial histone-like domain; sequence MNKAELIDVL…PGAQFKAVIS (90 aa). Lysine 3 bears the N6-acetyllysine mark. Position 3 is an N6-acetyllysine; alternate; partial (lysine 3). An N6-methyllysine; alternate; partial modification is found at lysine 3. At lysine 72 the chain carries N6-acetyllysine; partial. Residue lysine 86 is modified to N6-methyllysine; partial. The segment at 92–208 is C-terminus, required for nucleoid localization; it reads AQKLPADGPA…KKAPAKKGRR (117 aa). Residues lysine 94 and lysine 103 each carry the N6-acetyllysine; alternate; partial modification. 2 positions are modified to N6-methyllysine; alternate; partial: lysine 94 and lysine 103. The disordered stretch occupies residues 96–208; that stretch reads PADGPAVKRG…KKAPAKKGRR (113 aa). The interval 101-205 is degenerate repeats region; that stretch reads AVKRGVTAGP…AAAKKAPAKK (105 aa). Residues 113-208 are compositionally biased toward basic residues; the sequence is KAAKKAPAKK…KKAPAKKGRR (96 aa). Lysine 116, lysine 136, lysine 149, and lysine 168 each carry N6-acetyllysine.

This sequence belongs to the bacterial histone-like protein family. Long actinobacterial subfamily. In terms of assembly, may form oligomers. Interacts with RNase E (rne). Post-translationally, in addition to the identifed modifications, is also methylated on one of Arg-53; Arg-54 or Arg-55.

Its subcellular location is the cytoplasm. It localises to the nucleoid. The protein localises to the secreted. It is found in the cell wall. It carries out the reaction 4 Fe(2+) + O2 + 4 H(+) = 4 Fe(3+) + 2 H2O. Trans-stilbene derivative 4,4'-[(E)-ethene-1,2 diylbis({5[(phenylcarbonyl)amino]benzene-2,1-diyl}sulfonylimino)] dibenzoic acid (SD1) inhibits DNA binding at 50 uM. SD1 does not inhibit growth in a range of 3-1600 uM. Functionally, a nucleoid-associated protein (NAP) that plays a crucial role in local chromosome architecture. Helps organize newly replicated oriC proximal regions and contributes to the timing of replication initiation and coordinating replication with chromosome segregation. There are between 30,000-60,000 molecules in a log phase cell; the protein-DNA complex is dynamic during the cell cycle, with more complexes near the cell ends. Binds irregularly along the chromosome with higher binding near the origin of replication (oriC) and lowest binding near the chromosome terminus (ter). Binds DNA non-sequence specifically via both its N- and C-terminal domains with high affinity, has no preference for linear or supercoiled DNA. Binds four-way junction DNA. Represses T7 RNA polymerase in vitro. The C-terminal domain enhances DNA end-joining in vitro in the presence of T4 DNA ligase. RNase E and HupB jointly contribute to cellular adaptation to changing growth conditions and survival during antibiotic treatment. Has ferroxidase activity, converts Fe(2+) into Fe(3+). Binds Fe(3+) but not Fe(2+); prevents the generation of hydroxyl radicals by the Fenton reaction and thus protects DNA from damage. May function in iron storage. Its function is as follows. Plays a role in epigenetic resistance to antibiotics. Growth on levels of isoniazid (INH) near the minimal inhibitory concentration (MIC) kills most bacteria. The surviving cells grow as either large or small colony variants (SCV), evidence suggest SCVs are associated with persistent infections. Mutating this protein leads to specific loss of SCVs. In terms of biological role, may play a role in cell wall assembly. The polypeptide is DNA-binding protein HupB (Mycolicibacterium smegmatis (strain ATCC 700084 / mc(2)155) (Mycobacterium smegmatis)).